The following is a 348-amino-acid chain: MNPLAQLIIYTTVITGTLITMLSSHWFLAWAGLEMNMLAFIPTLIKKTNARSTEAATKYFLAQSTASMILMMAIISNNLLSGHWTTTTNYTNQFPPLAMTIALTMKLGMAPFHFWVPEVTQGTPLTSGLLLLTWQKLAPISIMYQIHPSINTHILLILSTLSIAVGSWGGLNQTQLRKILGYSSITHTGWMMMTLTYNPTITTLYLITYITLTTTMFLTLNLNSSTTTLTLSNTWNKSTHLMPLMTSTLLSLGGLPPLTGFLPKWVTIQELTMNNNFIIPTIMITMTLLNLYFYMRLIYTISLTLLPTSNNTKMTWQFENTKPTLFIPALITISTLLLPISPLILSIP.

The next 9 membrane-spanning stretches (helical) occupy residues 13-33, 60-80, 96-116, 124-144, 150-170, 200-220, 241-261, 278-298, and 325-345; these read VITGTLITMLSSHWFLAWAGL, FLAQSTASMILMMAIISNNLL, PLAMTIALTMKLGMAPFHFWV, PLTSGLLLLTWQKLAPISIMY, INTHILLILSTLSIAVGSWGG, TITTLYLITYITLTTTMFLTL, LMPLMTSTLLSLGGLPPLTGF, IIPTIMITMTLLNLYFYMRLI, and LFIPALITISTLLLPISPLIL.

The protein belongs to the complex I subunit 2 family. In terms of assembly, core subunit of respiratory chain NADH dehydrogenase (Complex I) which is composed of 45 different subunits. Interacts with TMEM242.

It is found in the mitochondrion inner membrane. It carries out the reaction a ubiquinone + NADH + 5 H(+)(in) = a ubiquinol + NAD(+) + 4 H(+)(out). Its function is as follows. Core subunit of the mitochondrial membrane respiratory chain NADH dehydrogenase (Complex I) which catalyzes electron transfer from NADH through the respiratory chain, using ubiquinone as an electron acceptor. Essential for the catalytic activity and assembly of complex I. This Papio hamadryas (Hamadryas baboon) protein is NADH-ubiquinone oxidoreductase chain 2.